A 407-amino-acid chain; its full sequence is Imidazolonepropionase (407 aa).

2 residues coordinate Fe(3+): histidine 68 and histidine 70. Zn(2+) is bound by residues histidine 68 and histidine 70. 4-imidazolone-5-propanoate contacts are provided by arginine 77, tyrosine 140, and histidine 173. Tyrosine 140 lines the N-formimidoyl-L-glutamate pocket. Histidine 236 serves as a coordination point for Fe(3+). Histidine 236 provides a ligand contact to Zn(2+). Glutamine 239 lines the 4-imidazolone-5-propanoate pocket. Aspartate 311 is a binding site for Fe(3+). Aspartate 311 serves as a coordination point for Zn(2+). N-formimidoyl-L-glutamate is bound by residues asparagine 313 and glycine 315. Threonine 316 provides a ligand contact to 4-imidazolone-5-propanoate.

It belongs to the metallo-dependent hydrolases superfamily. HutI family. It depends on Zn(2+) as a cofactor. Fe(3+) is required as a cofactor.

It localises to the cytoplasm. It carries out the reaction 4-imidazolone-5-propanoate + H2O = N-formimidoyl-L-glutamate. It functions in the pathway amino-acid degradation; L-histidine degradation into L-glutamate; N-formimidoyl-L-glutamate from L-histidine: step 3/3. Functionally, catalyzes the hydrolytic cleavage of the carbon-nitrogen bond in imidazolone-5-propanoate to yield N-formimidoyl-L-glutamate. It is the third step in the universal histidine degradation pathway. This Stenotrophomonas maltophilia (strain R551-3) protein is Imidazolonepropionase.